Here is a 330-residue protein sequence, read N- to C-terminus: Spondin-2 (330 aa).

A signal peptide spans 1 to 25; it reads MENVSFSLDRTLWVFLLAMLGSTAG. The 191-residue stretch at 30–220 folds into the Spondin domain; that stretch reads GESVCTARPL…EITASSPSHP (191 aa). The cysteines at positions 34 and 170 are disulfide-linked. Residue Glu140 participates in a divalent metal cation binding. Ca(2+) contacts are provided by Asp159, Asp187, and Asp191. Positions 276–330 constitute a TSP type-1 domain; the sequence is DCEVSLWSSWGLCGGPCGKLGAKSRTRYVRVQPANNGTPCPELEEEAECAPDNCV. Residue Trp282 is glycosylated (C-linked (Man) tryptophan).

As to quaternary structure, monomer. Interacts with integrin. As to expression, abundantly expressed in the developing hippocampus.

It is found in the secreted. The protein localises to the extracellular space. It localises to the extracellular matrix. Cell adhesion protein that promotes adhesion and outgrowth of hippocampal embryonic neurons. Binds directly to bacteria and their components and functions as an opsonin for macrophage phagocytosis of bacteria. Essential in the initiation of the innate immune response and represents a unique pattern-recognition molecule in the ECM for microbial pathogens. The sequence is that of Spondin-2 (Spon2) from Rattus norvegicus (Rat).